The chain runs to 275 residues: Elongation factor Ts (275 aa).

The tract at residues 76–79 (TDFV) is involved in Mg(2+) ion dislocation from EF-Tu.

This sequence belongs to the EF-Ts family.

The protein resides in the cytoplasm. Its function is as follows. Associates with the EF-Tu.GDP complex and induces the exchange of GDP to GTP. It remains bound to the aminoacyl-tRNA.EF-Tu.GTP complex up to the GTP hydrolysis stage on the ribosome. This Rhodococcus jostii (strain RHA1) protein is Elongation factor Ts.